The chain runs to 573 residues: Potassium-transporting ATPase potassium-binding subunit (573 aa).

10 helical membrane-spanning segments follow: residues 6-26 (ILFA…GSYI), 66-86 (FFSL…ILLL), 135-155 (ALAV…IALI), 177-197 (VFWI…FQGV), 257-277 (IQMV…GKWV), 283-303 (GWLI…VMTI), 382-402 (IFGG…LAVF), 428-448 (MFAL…AAVI), 493-513 (ITIA…VIML), and 537-557 (FIFA…TIFP).

It belongs to the KdpA family. In terms of assembly, the system is composed of three essential subunits: KdpA, KdpB and KdpC.

The protein resides in the cell inner membrane. In terms of biological role, part of the high-affinity ATP-driven potassium transport (or Kdp) system, which catalyzes the hydrolysis of ATP coupled with the electrogenic transport of potassium into the cytoplasm. This subunit binds the periplasmic potassium ions and delivers the ions to the membrane domain of KdpB through an intramembrane tunnel. The sequence is that of Potassium-transporting ATPase potassium-binding subunit from Francisella tularensis subsp. tularensis (strain WY96-3418).